The chain runs to 325 residues: Quinolinate synthase (325 aa).

Iminosuccinate contacts are provided by H41 and S58. C103 contributes to the [4Fe-4S] cluster binding site. Residues 129–131 (YIN) and S146 contribute to the iminosuccinate site. Residue C189 participates in [4Fe-4S] cluster binding. Iminosuccinate-binding positions include 215–217 (HPE) and T232. Residue C282 participates in [4Fe-4S] cluster binding.

It belongs to the quinolinate synthase family. Type 2 subfamily. [4Fe-4S] cluster is required as a cofactor.

The protein resides in the cytoplasm. The catalysed reaction is iminosuccinate + dihydroxyacetone phosphate = quinolinate + phosphate + 2 H2O + H(+). It participates in cofactor biosynthesis; NAD(+) biosynthesis; quinolinate from iminoaspartate: step 1/1. In terms of biological role, catalyzes the condensation of iminoaspartate with dihydroxyacetone phosphate to form quinolinate. This chain is Quinolinate synthase, found in Rippkaea orientalis (strain PCC 8801 / RF-1) (Cyanothece sp. (strain PCC 8801)).